Consider the following 235-residue polypeptide: Claudin-15 (235 aa).

M1 is a topological domain (cytoplasmic). A helical membrane pass occupies residues 2 to 24 (LVAVEIFGFFLTAVGLLMLGVTL). At 25-74 (AHSSWRVSTVHGNVITTNTIFENLWYSCATDSMGVHNCWEFPSMLALSGY) the chain is on the extracellular side. A disulfide bridge connects residues C52 and C62. The chain crosses the membrane as a helical span at residues 75–99 (IQACRALMITAILLGFLGLFLGMVG). Residues 100–115 (LRCTNIGGLELSRKTK) are Cytoplasmic-facing. S111 carries the phosphoserine modification. A helical membrane pass occupies residues 116–140 (LAATAGALHILAGICGMVAVSWYAF). The Extracellular portion of the chain corresponds to 141 to 159 (NITRDFFNPLYAGTKYELG). Residues 146–147 (FF) form an important for the formation of tight-junction strand-like structures region. The chain crosses the membrane as a helical span at residues 160–182 (PALYLGWSACLLAILGGICLFSN). The Cytoplasmic segment spans residues 183–235 (CCCSRDRDPATGVQLPYKAPVIPAASLAARLPAAASDEEGDSSFGKYGKNAYV). S218 and S225 each carry phosphoserine.

The protein belongs to the claudin family. In terms of assembly, can form homo- and heteropolymeric tight junction strands. Post-translationally, palmitoylated.

It is found in the cell junction. It localises to the tight junction. Its subcellular location is the cell membrane. It catalyses the reaction Na(+)(in) = Na(+)(out). The enzyme catalyses K(+)(in) = K(+)(out). The catalysed reaction is Cs(+)(in) = Cs(+)(out). It carries out the reaction Rb(+)(in) = Rb(+)(out). It catalyses the reaction Li(+)(in) = Li(+)(out). The enzyme catalyses NH4(+)(in) = NH4(+)(out). The catalysed reaction is methylamine(out) = methylamine(in). It carries out the reaction H2O(in) = H2O(out). In terms of biological role, forms paracellular channels: polymerizes in tight junction strands with cation- and water-selective channels through the strands, conveying epithelial permeability in a process known as paracellular tight junction permeability. In intestinal epithelium, allows for sodium and water fluxes from the peritoneal side to the lumen of the intestine to regulate nutrient absorption and intestinal morphogenesis. The polypeptide is Claudin-15 (CLDN15) (Bos taurus (Bovine)).